The sequence spans 301 residues: Leucine-rich repeat-containing protein 30 (301 aa).

LRR repeat units lie at residues 72-93 (EVQK…VGKL), 95-116 (RIVV…VSLL), 118-139 (CLKV…LSLC), 141-163 (KLEV…ADLS), 164-185 (RLRK…VFSL), 187-208 (ELIF…IQHL), 210-231 (SLQI…LCLV), 233-254 (SLEL…LHLL), and 265-287 (MDKG…VEGG).

The sequence is that of Leucine-rich repeat-containing protein 30 (LRRC30) from Homo sapiens (Human).